We begin with the raw amino-acid sequence, 359 residues long: Histidinol-phosphate aminotransferase (359 aa).

Lys217 bears the N6-(pyridoxal phosphate)lysine mark.

It belongs to the class-II pyridoxal-phosphate-dependent aminotransferase family. Histidinol-phosphate aminotransferase subfamily. Homodimer. It depends on pyridoxal 5'-phosphate as a cofactor.

The catalysed reaction is L-histidinol phosphate + 2-oxoglutarate = 3-(imidazol-4-yl)-2-oxopropyl phosphate + L-glutamate. It participates in amino-acid biosynthesis; L-histidine biosynthesis; L-histidine from 5-phospho-alpha-D-ribose 1-diphosphate: step 7/9. The polypeptide is Histidinol-phosphate aminotransferase (Roseobacter denitrificans (strain ATCC 33942 / OCh 114) (Erythrobacter sp. (strain OCh 114))).